The following is a 346-amino-acid chain: Glycerol-1-phosphate dehydrogenase [NAD(P)+] (346 aa).

Residues 93-97 and 115-118 contribute to the NAD(+) site; these read GSIID and TTAS. Residue Asp120 participates in substrate binding. Ser124 contacts NAD(+). Asp167 contributes to the substrate binding site. The Zn(2+) site is built by Asp167 and His247. Substrate is bound at residue His251. Residue His263 coordinates Zn(2+).

Belongs to the glycerol-1-phosphate dehydrogenase family. Zn(2+) serves as cofactor.

It localises to the cytoplasm. It carries out the reaction sn-glycerol 1-phosphate + NAD(+) = dihydroxyacetone phosphate + NADH + H(+). The enzyme catalyses sn-glycerol 1-phosphate + NADP(+) = dihydroxyacetone phosphate + NADPH + H(+). It participates in membrane lipid metabolism; glycerophospholipid metabolism. Its function is as follows. Catalyzes the NAD(P)H-dependent reduction of dihydroxyacetonephosphate (DHAP or glycerone phosphate) to glycerol 1-phosphate (G1P). The G1P thus generated is used as the glycerophosphate backbone of phospholipids in the cellular membranes of Archaea. This chain is Glycerol-1-phosphate dehydrogenase [NAD(P)+], found in Pyrococcus horikoshii (strain ATCC 700860 / DSM 12428 / JCM 9974 / NBRC 100139 / OT-3).